Reading from the N-terminus, the 99-residue chain is Sec-independent protein translocase protein TatA (99 aa).

Residues 1–21 (MIGNLKPLEIVLIIAVILLLF) traverse the membrane as a helical segment. Residues 46–99 (AMKKDDAATAAPTTETVADDTVPPQSTTARTIQAAPGDVTSSRPVSEAKPTTQS) form a disordered region. Residues 53–69 (ATAAPTTETVADDTVPP) show a composition bias toward low complexity. Residues 84–99 (VTSSRPVSEAKPTTQS) show a composition bias toward polar residues.

Belongs to the TatA/E family. The Tat system comprises two distinct complexes: a TatABC complex, containing multiple copies of TatA, TatB and TatC subunits, and a separate TatA complex, containing only TatA subunits. Substrates initially bind to the TatABC complex, which probably triggers association of the separate TatA complex to form the active translocon.

The protein resides in the cell membrane. Part of the twin-arginine translocation (Tat) system that transports large folded proteins containing a characteristic twin-arginine motif in their signal peptide across membranes. TatA could form the protein-conducting channel of the Tat system. This Streptomyces griseus subsp. griseus (strain JCM 4626 / CBS 651.72 / NBRC 13350 / KCC S-0626 / ISP 5235) protein is Sec-independent protein translocase protein TatA.